A 97-amino-acid polypeptide reads, in one-letter code: MAHHNGPRKKTRYKFKKDLRKRGIPPVTSVIQSFEIGQRVHVVVEPSVQKGMPHRRFHGKTGTVIGQRGRAWLLEVRDGDSVKQVIARPQHLKAQKV.

This sequence belongs to the eukaryotic ribosomal protein eL21 family.

In Methanoculleus marisnigri (strain ATCC 35101 / DSM 1498 / JR1), this protein is Large ribosomal subunit protein eL21.